The chain runs to 697 residues: tRNA 5-methylaminomethyl-2-thiouridine biosynthesis bifunctional protein MnmC (697 aa).

Residues 1–272 (MPKPASMAMN…KREMLTAVMS (272 aa)) are tRNA (mnm(5)s(2)U34)-methyltransferase. Residues 300-697 (IGAGVAGLLT…HKHKTRQAVI (398 aa)) form an FAD-dependent cmnm(5)s(2)U34 oxidoreductase region.

This sequence in the N-terminal section; belongs to the methyltransferase superfamily. tRNA (mnm(5)s(2)U34)-methyltransferase family. The protein in the C-terminal section; belongs to the DAO family. It depends on FAD as a cofactor.

It localises to the cytoplasm. It catalyses the reaction 5-aminomethyl-2-thiouridine(34) in tRNA + S-adenosyl-L-methionine = 5-methylaminomethyl-2-thiouridine(34) in tRNA + S-adenosyl-L-homocysteine + H(+). Its function is as follows. Catalyzes the last two steps in the biosynthesis of 5-methylaminomethyl-2-thiouridine (mnm(5)s(2)U) at the wobble position (U34) in tRNA. Catalyzes the FAD-dependent demodification of cmnm(5)s(2)U34 to nm(5)s(2)U34, followed by the transfer of a methyl group from S-adenosyl-L-methionine to nm(5)s(2)U34, to form mnm(5)s(2)U34. The protein is tRNA 5-methylaminomethyl-2-thiouridine biosynthesis bifunctional protein MnmC of Psychrobacter cryohalolentis (strain ATCC BAA-1226 / DSM 17306 / VKM B-2378 / K5).